The following is a 212-amino-acid chain: Protein-L-isoaspartate O-methyltransferase (212 aa).

The active site involves Ser-56.

The protein belongs to the methyltransferase superfamily. L-isoaspartyl/D-aspartyl protein methyltransferase family.

The protein resides in the cytoplasm. The enzyme catalyses [protein]-L-isoaspartate + S-adenosyl-L-methionine = [protein]-L-isoaspartate alpha-methyl ester + S-adenosyl-L-homocysteine. In terms of biological role, catalyzes the methyl esterification of L-isoaspartyl residues in peptides and proteins that result from spontaneous decomposition of normal L-aspartyl and L-asparaginyl residues. It plays a role in the repair and/or degradation of damaged proteins. This Myxococcus xanthus (strain DK1622) protein is Protein-L-isoaspartate O-methyltransferase.